Here is a 708-residue protein sequence, read N- to C-terminus: Tryptophan synthase (708 aa).

Residues 1 to 305 are tryptophan synthase alpha chain; the sequence is MEGIKQTFQR…EADIDAQLAA (305 aa). Active-site proton acceptor residues include Glu-49 and Asp-60. The tryptophan synthase beta chain stretch occupies residues 306 to 708; the sequence is LHGTIPKRFG…GPKIGWDLRF (403 aa). Lys-392 carries the post-translational modification N6-(pyridoxal phosphate)lysine.

It in the N-terminal section; belongs to the TrpA family. In the C-terminal section; belongs to the TrpB family. Pyridoxal 5'-phosphate serves as cofactor.

The enzyme catalyses (1S,2R)-1-C-(indol-3-yl)glycerol 3-phosphate + L-serine = D-glyceraldehyde 3-phosphate + L-tryptophan + H2O. The protein operates within amino-acid biosynthesis; L-tryptophan biosynthesis; L-tryptophan from chorismate: step 5/5. This is Tryptophan synthase (trp-3) from Neurospora crassa (strain ATCC 24698 / 74-OR23-1A / CBS 708.71 / DSM 1257 / FGSC 987).